Reading from the N-terminus, the 476-residue chain is Aspartyl/glutamyl-tRNA(Asn/Gln) amidotransferase subunit B (476 aa).

It belongs to the GatB/GatE family. GatB subfamily. Heterotrimer of A, B and C subunits.

The catalysed reaction is L-glutamyl-tRNA(Gln) + L-glutamine + ATP + H2O = L-glutaminyl-tRNA(Gln) + L-glutamate + ADP + phosphate + H(+). It catalyses the reaction L-aspartyl-tRNA(Asn) + L-glutamine + ATP + H2O = L-asparaginyl-tRNA(Asn) + L-glutamate + ADP + phosphate + 2 H(+). Its function is as follows. Allows the formation of correctly charged Asn-tRNA(Asn) or Gln-tRNA(Gln) through the transamidation of misacylated Asp-tRNA(Asn) or Glu-tRNA(Gln) in organisms which lack either or both of asparaginyl-tRNA or glutaminyl-tRNA synthetases. The reaction takes place in the presence of glutamine and ATP through an activated phospho-Asp-tRNA(Asn) or phospho-Glu-tRNA(Gln). The chain is Aspartyl/glutamyl-tRNA(Asn/Gln) amidotransferase subunit B from Bacillus licheniformis (strain ATCC 14580 / DSM 13 / JCM 2505 / CCUG 7422 / NBRC 12200 / NCIMB 9375 / NCTC 10341 / NRRL NRS-1264 / Gibson 46).